The primary structure comprises 1351 residues: ABC transporter C family member 6 (1351 aa).

An ABC transmembrane type-1 1 domain is found at 112–397 (NKYALVSNLF…LPYDIFKAIG (286 aa)). The next 3 helical transmembrane spans lie at 120–140 (LFIIIFTFLSPICLKFLINYI), 149–169 (SILKGILLCCLLCLCVLGQSI), and 248–268 (LLCYVVGPSGLVGFGVMVIAL). In terms of domain architecture, ABC transporter 1 spans 474-700 (NQDESINKKE…GIDFKSILKT (227 aa)). 510–517 (GVVGSGKT) is an ATP binding site. Residues 701–734 (KEIKKNVENETDSEELIKNEIEIENEIIDVNNAI) adopt a coiled-coil conformation. 6 consecutive transmembrane segments (helical) span residues 771–791 (GSSGVTLFITISLFFVGQAIF), 815–835 (IGYYLLIFGTFVVILMIRILL), 904–924 (LISIVFIIPIMVIPLIILSIA), 977–999 (MFDNININLGCFFYSFAVHRWVS), 1002–1022 (LEVMGWIMVFFTSLIATLFIS), and 1025–1045 (GLAALSVTTALSLNGYLSWGI). Residues 777–1060 (LFITISLFFV…LEVKMNSFQR (284 aa)) enclose the ABC transmembrane type-1 2 domain. Residues 1101 to 1336 (IEFKNVEIKY…PNSKFNKLIK (236 aa)) form the ABC transporter 2 domain. Residue 1135-1142 (GRTGAGKT) coordinates ATP.

The protein belongs to the ABC transporter superfamily. ABCC family. Conjugate transporter (TC 3.A.1.208) subfamily.

It is found in the membrane. The chain is ABC transporter C family member 6 (abcC6) from Dictyostelium discoideum (Social amoeba).